A 614-amino-acid polypeptide reads, in one-letter code: Dihydroxy-acid dehydratase (614 aa).

Residue Asp81 participates in Mg(2+) binding. Position 122 (Cys122) interacts with [2Fe-2S] cluster. Residues Asp123 and Lys124 each coordinate Mg(2+). The residue at position 124 (Lys124) is an N6-carboxylysine. Residue Cys195 participates in [2Fe-2S] cluster binding. Residue Glu491 participates in Mg(2+) binding. The active-site Proton acceptor is Ser517.

It belongs to the IlvD/Edd family. Homodimer. Requires [2Fe-2S] cluster as cofactor. The cofactor is Mg(2+).

The catalysed reaction is (2R)-2,3-dihydroxy-3-methylbutanoate = 3-methyl-2-oxobutanoate + H2O. It carries out the reaction (2R,3R)-2,3-dihydroxy-3-methylpentanoate = (S)-3-methyl-2-oxopentanoate + H2O. Its pathway is amino-acid biosynthesis; L-isoleucine biosynthesis; L-isoleucine from 2-oxobutanoate: step 3/4. The protein operates within amino-acid biosynthesis; L-valine biosynthesis; L-valine from pyruvate: step 3/4. Functionally, functions in the biosynthesis of branched-chain amino acids. Catalyzes the dehydration of (2R,3R)-2,3-dihydroxy-3-methylpentanoate (2,3-dihydroxy-3-methylvalerate) into 2-oxo-3-methylpentanoate (2-oxo-3-methylvalerate) and of (2R)-2,3-dihydroxy-3-methylbutanoate (2,3-dihydroxyisovalerate) into 2-oxo-3-methylbutanoate (2-oxoisovalerate), the penultimate precursor to L-isoleucine and L-valine, respectively. This Actinobacillus succinogenes (strain ATCC 55618 / DSM 22257 / CCUG 43843 / 130Z) protein is Dihydroxy-acid dehydratase.